A 137-amino-acid chain; its full sequence is Ribonuclease P protein component (137 aa).

The protein belongs to the RnpA family. In terms of assembly, consists of a catalytic RNA component (M1 or rnpB) and a protein subunit.

The enzyme catalyses Endonucleolytic cleavage of RNA, removing 5'-extranucleotides from tRNA precursor.. Functionally, RNaseP catalyzes the removal of the 5'-leader sequence from pre-tRNA to produce the mature 5'-terminus. It can also cleave other RNA substrates such as 4.5S RNA. The protein component plays an auxiliary but essential role in vivo by binding to the 5'-leader sequence and broadening the substrate specificity of the ribozyme. This chain is Ribonuclease P protein component, found in Porphyromonas gingivalis (strain ATCC BAA-308 / W83).